A 291-amino-acid polypeptide reads, in one-letter code: Signal peptidase I (291 aa).

Residues M1–S45 are Cytoplasmic-facing. Residues F46–V66 form a helical membrane-spanning segment. At P67–D291 the chain is on the periplasmic side. Active-site residues include S70 and K133.

It belongs to the peptidase S26 family.

The protein localises to the cell inner membrane. The catalysed reaction is Cleavage of hydrophobic, N-terminal signal or leader sequences from secreted and periplasmic proteins.. This chain is Signal peptidase I (lepB), found in Rickettsia bellii (strain RML369-C).